A 170-amino-acid chain; its full sequence is MANPKNTAALQELKARFEEADATVLTEYRGLSVVETTELRRALGQDVTYSVAKNTLLKLAAKEAGIEIDESLLTGPTAVAFIKGEAVDAAKAMKAFGKDHEAFVVKGGNMDGAALSAEQVMAIADLDNRETTLAKLAGALQGSLAKAAGLFNAPASQVARLAAALQEKKD.

The protein belongs to the universal ribosomal protein uL10 family. As to quaternary structure, part of the ribosomal stalk of the 50S ribosomal subunit. The N-terminus interacts with L11 and the large rRNA to form the base of the stalk. The C-terminus forms an elongated spine to which L12 dimers bind in a sequential fashion forming a multimeric L10(L12)X complex.

Forms part of the ribosomal stalk, playing a central role in the interaction of the ribosome with GTP-bound translation factors. In Corynebacterium urealyticum (strain ATCC 43042 / DSM 7109), this protein is Large ribosomal subunit protein uL10.